Consider the following 1215-residue polypeptide: Pesticidal crystal protein Cry1Ka (1215 aa).

The protein belongs to the delta endotoxin family.

Functionally, promotes colloidosmotic lysis by binding to the midgut epithelial cells of insects. Selectively toxic to Artogeia rapae but not active on Plutella xylostella. This is Pesticidal crystal protein Cry1Ka (cry1Ka) from Bacillus thuringiensis subsp. morrisoni.